The primary structure comprises 268 residues: tRNA pseudouridine synthase A (268 aa).

Aspartate 52 (nucleophile) is an active-site residue. Tyrosine 113 lines the substrate pocket.

This sequence belongs to the tRNA pseudouridine synthase TruA family. Homodimer.

It carries out the reaction uridine(38/39/40) in tRNA = pseudouridine(38/39/40) in tRNA. In terms of biological role, formation of pseudouridine at positions 38, 39 and 40 in the anticodon stem and loop of transfer RNAs. In Chlamydia abortus (strain DSM 27085 / S26/3) (Chlamydophila abortus), this protein is tRNA pseudouridine synthase A.